Consider the following 119-residue polypeptide: Basic phospholipase A2 (119 aa).

7 cysteine pairs are disulfide-bonded: Cys11–Cys71, Cys27–Cys118, Cys29–Cys45, Cys44–Cys99, Cys51–Cys92, Cys60–Cys85, and Cys78–Cys90. Ca(2+) contacts are provided by Tyr28, Gly30, and Gly32. His48 is a catalytic residue. Residue Asp49 coordinates Ca(2+). Residue Asp93 is part of the active site.

Belongs to the phospholipase A2 family. Group I subfamily. D49 sub-subfamily. The cofactor is Ca(2+). As to expression, expressed by the venom gland.

It is found in the secreted. It carries out the reaction a 1,2-diacyl-sn-glycero-3-phosphocholine + H2O = a 1-acyl-sn-glycero-3-phosphocholine + a fatty acid + H(+). Snake venom phospholipase A2 (PLA2) that has several activities. It is myotoxic, has weak anticoagulant activity and inhibits neuromuscular transmission by blocking acetylcholine release from the nerve termini. PLA2 catalyzes the calcium-dependent hydrolysis of the 2-acyl groups in 3-sn-phosphoglycerides. The chain is Basic phospholipase A2 from Hydrophis schistosus (Beaked sea snake).